Here is a 302-residue protein sequence, read N- to C-terminus: Potassium/proton antiporter CemA (302 aa).

The next 4 helical transmembrane spans lie at 55–75, 187–207, 225–247, and 262–282; these read VFVS…ITFL, FVSF…IIIL, FLLI…ELFL, and FIFL…KYWI.

The protein belongs to the CemA family.

The protein resides in the plastid. It localises to the chloroplast inner membrane. The catalysed reaction is K(+)(in) + H(+)(out) = K(+)(out) + H(+)(in). Its function is as follows. Contributes to K(+)/H(+) antiport activity by supporting proton efflux to control proton extrusion and homeostasis in chloroplasts in a light-dependent manner to modulate photosynthesis. Prevents excessive induction of non-photochemical quenching (NPQ) under continuous-light conditions. Indirectly promotes efficient inorganic carbon uptake into chloroplasts. The sequence is that of Potassium/proton antiporter CemA from Tupiella akineta (Green alga).